We begin with the raw amino-acid sequence, 101 residues long: NADH-quinone oxidoreductase subunit K (101 aa).

A run of 3 helical transmembrane segments spans residues 4 to 24 (LSHF…GIFL), 30 to 50 (IVLL…FIAF), and 61 to 81 (VFVF…LAIL).

It belongs to the complex I subunit 4L family. In terms of assembly, NDH-1 is composed of 14 different subunits. Subunits NuoA, H, J, K, L, M, N constitute the membrane sector of the complex.

The protein localises to the cell inner membrane. The catalysed reaction is a quinone + NADH + 5 H(+)(in) = a quinol + NAD(+) + 4 H(+)(out). In terms of biological role, NDH-1 shuttles electrons from NADH, via FMN and iron-sulfur (Fe-S) centers, to quinones in the respiratory chain. The immediate electron acceptor for the enzyme in this species is believed to be ubiquinone. Couples the redox reaction to proton translocation (for every two electrons transferred, four hydrogen ions are translocated across the cytoplasmic membrane), and thus conserves the redox energy in a proton gradient. The polypeptide is NADH-quinone oxidoreductase subunit K (Thiobacillus denitrificans (strain ATCC 25259 / T1)).